Here is a 505-residue protein sequence, read N- to C-terminus: Maturase K (505 aa).

This sequence belongs to the intron maturase 2 family. MatK subfamily.

The protein resides in the plastid. Its subcellular location is the chloroplast. In terms of biological role, usually encoded in the trnK tRNA gene intron. Probably assists in splicing its own and other chloroplast group II introns. This is Maturase K from Spinacia oleracea (Spinach).